The chain runs to 405 residues: MTDSEPQTLNNNSEITASHNDDILEYLSVDDYDYELPDQLIARYPLAQRSASKLLYLRANNANSQVEVEDKLFSELPELLNAGDLIVFNDTKVMKARLFGQKDTGGKIEVLIERLVALSDLNSADLDTITSNSDIIDMTVIAEKHIALCHVKASKALKLGQGLVLADGHMTGVMIGRQENLFILAFDTPILPDLELYGELPIPPYFERHADATDNTRYQTVFHDPAKLASVAAPTASLHFDDIVLEKLAAKGIQTAFVTLHVGAGTFAPVKTENLLNHTMHSEYAHLPQATADLINQTHANGKQVIAIGTTVTRVLETAYQQTAVDRQPLSGWAGDTEIFIYPGFEFGVVDKLLTNFHLPKSTLLMLVSAFATKKSIEEAYQHAIESEYRFFSYGDAMLLDKKVD.

It belongs to the QueA family. As to quaternary structure, monomer.

The protein localises to the cytoplasm. The catalysed reaction is 7-aminomethyl-7-carbaguanosine(34) in tRNA + S-adenosyl-L-methionine = epoxyqueuosine(34) in tRNA + adenine + L-methionine + 2 H(+). The protein operates within tRNA modification; tRNA-queuosine biosynthesis. Transfers and isomerizes the ribose moiety from AdoMet to the 7-aminomethyl group of 7-deazaguanine (preQ1-tRNA) to give epoxyqueuosine (oQ-tRNA). This is S-adenosylmethionine:tRNA ribosyltransferase-isomerase from Psychrobacter cryohalolentis (strain ATCC BAA-1226 / DSM 17306 / VKM B-2378 / K5).